We begin with the raw amino-acid sequence, 284 residues long: Ubiquinone biosynthesis protein COQ4, mitochondrial (284 aa).

Zn(2+) contacts are provided by H165, D166, H169, and E181.

Belongs to the COQ4 family. Component of a multi-subunit COQ enzyme complex, composed of at least COQ3, COQ4, COQ5, COQ6, COQ7 and COQ9. Zn(2+) serves as cofactor.

Its subcellular location is the mitochondrion inner membrane. The catalysed reaction is a 4-hydroxy-3-methoxy-5-(all-trans-polyprenyl)benzoate + H(+) = a 2-methoxy-6-(all-trans-polyprenyl)phenol + CO2. Its pathway is cofactor biosynthesis; ubiquinone biosynthesis. Functionally, lyase that catalyzes the C1-decarboxylation of 4-hydroxy-3-methoxy-5-(all-trans-polyprenyl)benzoic acid into 2-methoxy-6-(all-trans-polyprenyl)phenol during ubiquinone biosynthesis. The polypeptide is Ubiquinone biosynthesis protein COQ4, mitochondrial (Blastomyces gilchristii (strain SLH14081) (Blastomyces dermatitidis)).